A 152-amino-acid polypeptide reads, in one-letter code: 3-hydroxyacyl-[acyl-carrier-protein] dehydratase FabZ (152 aa).

The active site involves histidine 58.

Belongs to the thioester dehydratase family. FabZ subfamily.

The protein localises to the cytoplasm. The catalysed reaction is a (3R)-hydroxyacyl-[ACP] = a (2E)-enoyl-[ACP] + H2O. Its function is as follows. Involved in unsaturated fatty acids biosynthesis. Catalyzes the dehydration of short chain beta-hydroxyacyl-ACPs and long chain saturated and unsaturated beta-hydroxyacyl-ACPs. The polypeptide is 3-hydroxyacyl-[acyl-carrier-protein] dehydratase FabZ (Prochlorococcus marinus (strain MIT 9215)).